We begin with the raw amino-acid sequence, 830 residues long: DNA gyrase subunit A (830 aa).

Positions 34–514 (LPDVRDGLKP…NHSDINMEDL (481 aa)) constitute a Topo IIA-type catalytic domain. Tyr-122 acts as the O-(5'-phospho-DNA)-tyrosine intermediate in catalysis. The short motif at 541 to 547 (QRRGGKG) is the GyrA-box element.

Belongs to the type II topoisomerase GyrA/ParC subunit family. In terms of assembly, heterotetramer, composed of two GyrA and two GyrB chains. In the heterotetramer, GyrA contains the active site tyrosine that forms a transient covalent intermediate with DNA, while GyrB binds cofactors and catalyzes ATP hydrolysis.

Its subcellular location is the cytoplasm. It catalyses the reaction ATP-dependent breakage, passage and rejoining of double-stranded DNA.. Functionally, a type II topoisomerase that negatively supercoils closed circular double-stranded (ds) DNA in an ATP-dependent manner to modulate DNA topology and maintain chromosomes in an underwound state. Negative supercoiling favors strand separation, and DNA replication, transcription, recombination and repair, all of which involve strand separation. Also able to catalyze the interconversion of other topological isomers of dsDNA rings, including catenanes and knotted rings. Type II topoisomerases break and join 2 DNA strands simultaneously in an ATP-dependent manner. The protein is DNA gyrase subunit A of Buchnera aphidicola subsp. Acyrthosiphon pisum (strain APS) (Acyrthosiphon pisum symbiotic bacterium).